A 197-amino-acid polypeptide reads, in one-letter code: Gastrula zinc finger protein XlCGF17.1 (197 aa).

7 C2H2-type zinc fingers span residues I6–H28, Y34–H56, F62–H84, F90–H112, F118–H140, F146–H169, and F175–H197.

The protein belongs to the krueppel C2H2-type zinc-finger protein family.

Its subcellular location is the nucleus. Its function is as follows. May be involved in transcriptional regulation. The polypeptide is Gastrula zinc finger protein XlCGF17.1 (Xenopus laevis (African clawed frog)).